The following is a 131-amino-acid chain: Sec-independent protein translocase protein TatB (131 aa).

The chain crosses the membrane as a helical span at residues 1-21 (MFDISFAELVVVGIVALIVIG). Composition is skewed to polar residues over residues 71–93 (NSFE…TQSA) and 111–131 (PVNT…QPNS). A disordered region spans residues 71-131 (NSFENSVRSE…APAEPRQPNS (61 aa)).

Belongs to the TatB family. In terms of assembly, the Tat system comprises two distinct complexes: a TatABC complex, containing multiple copies of TatA, TatB and TatC subunits, and a separate TatA complex, containing only TatA subunits. Substrates initially bind to the TatABC complex, which probably triggers association of the separate TatA complex to form the active translocon.

The protein localises to the cell inner membrane. Functionally, part of the twin-arginine translocation (Tat) system that transports large folded proteins containing a characteristic twin-arginine motif in their signal peptide across membranes. Together with TatC, TatB is part of a receptor directly interacting with Tat signal peptides. TatB may form an oligomeric binding site that transiently accommodates folded Tat precursor proteins before their translocation. This is Sec-independent protein translocase protein TatB from Nitrosomonas europaea (strain ATCC 19718 / CIP 103999 / KCTC 2705 / NBRC 14298).